The sequence spans 356 residues: Phosphate acyltransferase (356 aa).

It belongs to the PlsX family. As to quaternary structure, homodimer. Probably interacts with PlsY.

The protein localises to the cytoplasm. The enzyme catalyses a fatty acyl-[ACP] + phosphate = an acyl phosphate + holo-[ACP]. It participates in lipid metabolism; phospholipid metabolism. Catalyzes the reversible formation of acyl-phosphate (acyl-PO(4)) from acyl-[acyl-carrier-protein] (acyl-ACP). This enzyme utilizes acyl-ACP as fatty acyl donor, but not acyl-CoA. The polypeptide is Phosphate acyltransferase (Stutzerimonas stutzeri (strain A1501) (Pseudomonas stutzeri)).